We begin with the raw amino-acid sequence, 221 residues long: Octanoyltransferase (221 aa).

In terms of domain architecture, BPL/LPL catalytic spans 29–208 (DEIPDTCLLL…RLTEFLLPAR (180 aa)). Residues 67–74 (RGGRITWH), 138–140 (AIG), and 151–153 (GFA) each bind substrate. The Acyl-thioester intermediate role is filled by cysteine 169.

This sequence belongs to the LipB family.

It localises to the cytoplasm. It catalyses the reaction octanoyl-[ACP] + L-lysyl-[protein] = N(6)-octanoyl-L-lysyl-[protein] + holo-[ACP] + H(+). It participates in protein modification; protein lipoylation via endogenous pathway; protein N(6)-(lipoyl)lysine from octanoyl-[acyl-carrier-protein]: step 1/2. Functionally, catalyzes the transfer of endogenously produced octanoic acid from octanoyl-acyl-carrier-protein onto the lipoyl domains of lipoate-dependent enzymes. Lipoyl-ACP can also act as a substrate although octanoyl-ACP is likely to be the physiological substrate. This chain is Octanoyltransferase, found in Acidothermus cellulolyticus (strain ATCC 43068 / DSM 8971 / 11B).